We begin with the raw amino-acid sequence, 421 residues long: MSLTSKLSITDVDLKDKRVLIRVDFNVPLDKNDNTTITNPQRIVGALPTIKYAIDNGAKAVILMSHLGRPDGKKNPKYSLKPVVPKLKELLGRDVIFTEDCVGPEVEETVNKASGGQVILLENLRFHAEEEGSSKDADGNKVKADKDAVAQFRKGLTALGDIYINDAFGTAHRAHSSMVGVDLPQKASGFLVKKELEYFAKALEEPQRPFLAILGGSKVSDKIQLIDNLLPKVNSLIITGGMAFTFKKTLENVKIGSSLFDEAGSKIVGNIIEKAKKHNVKVVLPVDYVTADKFAADAKTGYATDEQGIPDGYMGLDVGEKSVESYKQTIAESKTILWNGPPGVFEMEPFAKATKATLDAAVAAVQNGATVIIGGGDTATVAAKYGAEDKISHVSTGGGASLELLEGKELPGVAALSEKSK.

Val-23, Asp-24, Phe-25, Asn-26, Gln-41, Arg-42, Ser-65, His-66, Gly-68, Arg-69, Leu-124, Arg-125, His-172, and Arg-173 together coordinate (2R)-3-phosphoglycerate. Position 216 (Gly-216) interacts with ADP. Residue Gly-216 participates in CDP binding. AMP is bound at residue Lys-218. Residue Asp-221 coordinates CDP. A Mg(2+)-binding site is contributed by Asp-221. Lys-222 is an AMP binding site. Lys-222 lines the ATP pocket. Gly-240 lines the ADP pocket. CDP is bound at residue Gly-240. AMP is bound by residues Gly-241 and Gly-315. ATP is bound by residues Gly-241 and Gly-315. CDP is bound by residues Gly-340 and Phe-345. Residue Phe-345 coordinates ADP. AMP is bound at residue Glu-346. ATP-binding residues include Glu-346, Asp-377, and Thr-378. Position 377 (Asp-377) interacts with Mg(2+).

Belongs to the phosphoglycerate kinase family. Monomer. Mg(2+) serves as cofactor.

Its subcellular location is the cytoplasm. It localises to the mitochondrion. The enzyme catalyses (2R)-3-phosphoglycerate + ATP = (2R)-3-phospho-glyceroyl phosphate + ADP. It participates in carbohydrate degradation; glycolysis; pyruvate from D-glyceraldehyde 3-phosphate: step 2/5. Its function is as follows. Catalyzes one of the two ATP producing reactions in the glycolytic pathway via the reversible conversion of 1,3-diphosphoglycerate to 3-phosphoglycerate. Both L- and D- forms of purine and pyrimidine nucleotides can be used as substrates, but the activity is much lower on pyrimidines. Negatively regulates the biosynthesis of acetyl-CoA from pyruvate in the mitochondrion. In Emericella nidulans (strain FGSC A4 / ATCC 38163 / CBS 112.46 / NRRL 194 / M139) (Aspergillus nidulans), this protein is Phosphoglycerate kinase (pgkA).